A 359-amino-acid chain; its full sequence is Phospho-N-acetylmuramoyl-pentapeptide-transferase (359 aa).

The next 10 membrane-spanning stretches (helical) occupy residues Val-23–Ala-43, Met-68–Phe-88, Val-92–Met-112, Met-126–Gly-146, Ala-165–Ala-185, Gly-198–Ala-218, Ser-235–Tyr-255, Val-262–Val-282, Ile-287–Val-307, and Lys-336–Leu-356.

Belongs to the glycosyltransferase 4 family. MraY subfamily. Mg(2+) serves as cofactor.

The protein resides in the cell inner membrane. It carries out the reaction UDP-N-acetyl-alpha-D-muramoyl-L-alanyl-gamma-D-glutamyl-meso-2,6-diaminopimeloyl-D-alanyl-D-alanine + di-trans,octa-cis-undecaprenyl phosphate = di-trans,octa-cis-undecaprenyl diphospho-N-acetyl-alpha-D-muramoyl-L-alanyl-D-glutamyl-meso-2,6-diaminopimeloyl-D-alanyl-D-alanine + UMP. It functions in the pathway cell wall biogenesis; peptidoglycan biosynthesis. Its function is as follows. Catalyzes the initial step of the lipid cycle reactions in the biosynthesis of the cell wall peptidoglycan: transfers peptidoglycan precursor phospho-MurNAc-pentapeptide from UDP-MurNAc-pentapeptide onto the lipid carrier undecaprenyl phosphate, yielding undecaprenyl-pyrophosphoryl-MurNAc-pentapeptide, known as lipid I. This is Phospho-N-acetylmuramoyl-pentapeptide-transferase from Helicobacter hepaticus (strain ATCC 51449 / 3B1).